A 755-amino-acid chain; its full sequence is Tryptophan 2-monooxygenase (755 aa).

4 residues coordinate FMN: Ser247, Glu267, Lys275, and Arg295. Arg295 provides a ligand contact to substrate.

It belongs to the tryptophan 2-monooxygenase family. It depends on FMN as a cofactor.

It catalyses the reaction L-tryptophan + O2 = indole-3-acetamide + CO2 + H2O. The protein operates within plant hormone metabolism; auxin biosynthesis. The sequence is that of Tryptophan 2-monooxygenase (tms1) from Agrobacterium tumefaciens (strain Ach5).